Reading from the N-terminus, the 470-residue chain is Sugar transporter ERD6-like 8 (470 aa).

Residues 1 to 16 (METRKDDMEKRNDKSE) are compositionally biased toward basic and acidic residues. Positions 1–24 (METRKDDMEKRNDKSEPLLLPENG) are disordered. Transmembrane regions (helical) follow at residues 33–53 (WMVYLSTIIAVCGSYEFGTCV), 73–93 (QFSVFGSILNMGAVLGAITSG), 110–130 (VISAIGWLIIYLAKGDVPLDF), 133–153 (FLTGYGCGTLSFVVPVFIAEI), 164–184 (TLNQLFIVIGLASMFLIGAVV), 188–208 (TLALTGVAPCVVLFFGTWFIP), 270–290 (FVIVGVGLMFFQQFVGINGVI), 307–327 (GSILYSIEQVVLTALGATLLI), 335–355 (LLMASAVGMLIGCLLIGNSFL), 373–393 (GVLVYIGSFSIGMGAIPWVIM), 409–429 (VTVVNWLSSWLVSFTFNFLMI), and 434–454 (GTFYVYGGVCVLAIIFIAKLV).

It belongs to the major facilitator superfamily. Sugar transporter (TC 2.A.1.1) family.

The protein localises to the membrane. Sugar transporter. The protein is Sugar transporter ERD6-like 8 of Arabidopsis thaliana (Mouse-ear cress).